Reading from the N-terminus, the 96-residue chain is NADH-ubiquinone oxidoreductase chain 4L (96 aa).

3 helical membrane passes run 2-22 (IMILYWSLPMILFILGLFCFV), 28-48 (LLSMLLSLEFIVLMLFFMLFI), and 62-82 (MFLTFSVCEGALGLSILVSMI).

This sequence belongs to the complex I subunit 4L family.

The protein resides in the mitochondrion membrane. The catalysed reaction is a ubiquinone + NADH + 5 H(+)(in) = a ubiquinol + NAD(+) + 4 H(+)(out). Functionally, core subunit of the mitochondrial membrane respiratory chain NADH dehydrogenase (Complex I) that is believed to belong to the minimal assembly required for catalysis. Complex I functions in the transfer of electrons from NADH to the respiratory chain. The immediate electron acceptor for the enzyme is believed to be ubiquinone. This chain is NADH-ubiquinone oxidoreductase chain 4L (mt:ND4L), found in Drosophila melanogaster (Fruit fly).